Consider the following 275-residue polypeptide: Membrane protein insertase YidC 2 (275 aa).

A signal peptide spans Met-1–Gly-21. Cys-22 carries N-palmitoyl cysteine lipidation. Cys-22 is lipidated: S-diacylglycerol cysteine. A run of 4 helical transmembrane segments spans residues Phe-48–Ile-68, Gln-133–Ile-153, Met-174–Gly-194, and Ile-212–Gly-232.

This sequence belongs to the OXA1/ALB3/YidC family. Type 2 subfamily.

It is found in the cell membrane. Its function is as follows. Required for the insertion and/or proper folding and/or complex formation of integral membrane proteins into the membrane. Involved in integration of membrane proteins that insert both dependently and independently of the Sec translocase complex, as well as at least some lipoproteins. This Listeria monocytogenes serotype 4b (strain F2365) protein is Membrane protein insertase YidC 2.